The chain runs to 487 residues: N-succinylglutamate 5-semialdehyde dehydrogenase (487 aa).

221–226 contacts NAD(+); sequence GSSRTG. Residues glutamate 244 and cysteine 278 contribute to the active site.

Belongs to the aldehyde dehydrogenase family. AstD subfamily.

The enzyme catalyses N-succinyl-L-glutamate 5-semialdehyde + NAD(+) + H2O = N-succinyl-L-glutamate + NADH + 2 H(+). The protein operates within amino-acid degradation; L-arginine degradation via AST pathway; L-glutamate and succinate from L-arginine: step 4/5. Functionally, catalyzes the NAD-dependent reduction of succinylglutamate semialdehyde into succinylglutamate. The chain is N-succinylglutamate 5-semialdehyde dehydrogenase from Ectopseudomonas mendocina (strain ymp) (Pseudomonas mendocina).